The sequence spans 250 residues: Proteasome subunit alpha type-2 (250 aa).

A Glycyl lysine isopeptide (Lys-Gly) (interchain with G-Cter in ubiquitin) cross-link involves residue K108.

It belongs to the peptidase T1A family. In terms of assembly, the 26S proteasome consists of a 20S proteasome core and two 19S regulatory subunits. The 20S proteasome core is composed of 28 subunits that are arranged in four stacked rings, resulting in a barrel-shaped structure. The two end rings are each formed by seven alpha subunits, and the two central rings are each formed by seven beta subunits. The catalytic chamber with the active sites is on the inside of the barrel.

The protein resides in the cytoplasm. The protein localises to the nucleus. Functionally, the proteasome degrades poly-ubiquitinated proteins in the cytoplasm and in the nucleus. It is essential for the regulated turnover of proteins and for the removal of misfolded proteins. The proteasome is a multicatalytic proteinase complex that is characterized by its ability to cleave peptides with Arg, Phe, Tyr, Leu, and Glu adjacent to the leaving group at neutral or slightly basic pH. It has an ATP-dependent proteolytic activity. The polypeptide is Proteasome subunit alpha type-2 (PRE8) (Saccharomyces cerevisiae (strain ATCC 204508 / S288c) (Baker's yeast)).